Here is a 536-residue protein sequence, read N- to C-terminus: Caspase A (536 aa).

Residues 1 to 273 constitute a propeptide, removed in mature form by autoprocessing; it reads MVLKTIEDNC…DSQSRMPRTD (273 aa). Residues His-364 and Cys-406 contribute to the active site.

Belongs to the peptidase C14A family. As to quaternary structure, heterodimer formed by the tight association of the large subunit p16 and the small subunit p14. In terms of processing, autocatalytic cleavage removes the propeptide and generates the two active subunits p16 and p14 in vitro. Cannot be cleaved by ced-3 in vitro. Isoform a: Expression is restricted to the late germline pachytene stage of meiosis I in both L4 larvae and adult hermaphrodite gonads. Isoform b: Expression is restricted to the late germline pachytene stage of meiosis I in both L4 larvae and adult hermaphrodite gonads.

The enzyme catalyses Strict requirement for an Asp residue at position P1 and has a preferred cleavage sequence of Tyr-Val-Ala-Asp-|-.. With respect to regulation, inhibited by cysteine protease inhibitor iodoacetic acid (CH3COOI) but not by N-[N-(L-3-transcarboxirane-2-carbonyl)-leucyl]-agmatine (E-64) or benzyloxycarbonyl-DEVD-fluoro-methyl ketone (Z-DEVD-FMK). Cysteine protease which, in vitro, cleaves itself and caspase ced-3 into their mature active forms. Also cleaves, in vitro, inactive caspase csp-2 isoform b. Required maternally to induce apoptosis in a subset of cells fated to die during embryogenesis, mostly independently of the ced-9, ced-4 and ced-3 canonical apoptosis pathway. Involved in the degeneration of dopaminergic CEP neurons in response to high Mn(2+) levels. Functionally, dispensable for regulating apoptosis during embryogenesis. The sequence is that of Caspase A from Caenorhabditis elegans.